Reading from the N-terminus, the 439-residue chain is Glucan 1,3-beta-glucosidase (439 aa).

Residues 1–18 (MLLSLLFLLSTFAFGALT) form the signal peptide. Residue Glu227 is the Proton donor of the active site. Cystine bridges form between Cys311–Cys437 and Cys336–Cys366. Glu328 serves as the catalytic Nucleophile.

It belongs to the glycosyl hydrolase 5 (cellulase A) family.

The protein resides in the secreted. It catalyses the reaction Successive hydrolysis of beta-D-glucose units from the non-reducing ends of (1-&gt;3)-beta-D-glucans, releasing alpha-glucose.. Beta-glucanases participate in the metabolism of beta-glucan, the main structural component of the cell wall. It could also function biosynthetically as a transglycosylase. The sequence is that of Glucan 1,3-beta-glucosidase (EXG1) from Lachancea kluyveri (strain ATCC 58438 / CBS 3082 / BCRC 21498 / NBRC 1685 / JCM 7257 / NCYC 543 / NRRL Y-12651) (Yeast).